The following is a 409-amino-acid chain: Elongation factor 1-gamma (409 aa).

A GST N-terminal domain is found at 2–81 (SVGTVYGKIG…YLASLNKTRA (80 aa)). One can recognise a GST C-terminal domain in the interval 86–212 (TAEEKAKVLQ…EPLKFIDQPL (127 aa)). Basic and acidic residues predominate over residues 219 to 248 (NKEAAPAKKAEKKKDEKKKNAPKPQAERPA). The segment at 219–261 (NKEAAPAKKAEKKKDEKKKNAPKPQAERPAKPPKHPLASAPNG) is disordered. The EF-1-gamma C-terminal domain maps to 251–409 (PKHPLASAPN…REVADGKVCK (159 aa)).

EF-1 is composed of four subunits: alpha, beta, delta, and gamma.

In terms of biological role, probably plays a role in anchoring the complex to other cellular components. The sequence is that of Elongation factor 1-gamma (tef3) from Schizosaccharomyces pombe (strain 972 / ATCC 24843) (Fission yeast).